A 150-amino-acid polypeptide reads, in one-letter code: MAKKIIGSLKLQVKAGQANPSPPVGPALGQRGLNIMAFVKEFNAKTADLEPGTPTPVIITYYQDKSFSLELKTPPASFLLKKAAGLAPVGKRNRPKGSAKPGREVAGTVAVAQIRKIAEAKMKDLNANDVEAAMQIILGSAKSCGIEVKG.

Belongs to the universal ribosomal protein uL11 family. As to quaternary structure, part of the ribosomal stalk of the 50S ribosomal subunit. Interacts with L10 and the large rRNA to form the base of the stalk. L10 forms an elongated spine to which L12 dimers bind in a sequential fashion forming a multimeric L10(L12)X complex. Post-translationally, one or more lysine residues are methylated.

Forms part of the ribosomal stalk which helps the ribosome interact with GTP-bound translation factors. The polypeptide is Large ribosomal subunit protein uL11 (Cereibacter sphaeroides (strain ATCC 17025 / ATH 2.4.3) (Rhodobacter sphaeroides)).